The following is a 228-amino-acid chain: Response regulator MprA (228 aa).

In terms of domain architecture, Response regulatory spans 2-116; that stretch reads RILAVDDDRA…ELLARIRALL (115 aa). Asp46 is subject to 4-aspartylphosphate. Positions 127 to 225 form a DNA-binding region, ompR/PhoB-type; the sequence is SVAMSFSDLT…VRGVGYVLRE (99 aa).

Phosphorylated and dephosphorylated by MprB.

The protein localises to the cytoplasm. In terms of biological role, member of the two-component regulatory system MprB/MprA which contributes to maintaining a balance among several systems involved in stress resistance and is required for establishment and maintenance of persistent infection in the host. Functions as a transcriptional regulator that recognizes a 19-bp nucleotide motif comprizing two loosely conserved 8-bp direct DNA-binding motif repeats separated by a 3-bp spacer region. This Mycobacterium leprae (strain TN) protein is Response regulator MprA (mprA).